The primary structure comprises 870 residues: MTSQTFTTSSATPPTRGVVPDKPALEGLEVKWGKIWEDEQLYAFDATTVDSREQVFAIDTPPPTVSGHLHPGHVFSYTHTDTVARYQRMRGKKVFYPMGWDDNGLPTERRVQNYYGVRCDPSLPYDPDFTPPSKPNPKRQVPISRRNFVELCVELTAVDEKTFQDLWRAVGLSVDWNQLYTTISPESQRIAQLAFLRNYARGEAYLSDAPTLWDVTFSTAVAQAELEARDYPGAYHRLGFHRPNGEDVFIETTRPELLAACCALIAHPDDERYQHLFGTTVTTPLYGVEVPVLAHSAAEMDKGAGIAMCCTFGDLTDVAWWRELQLPTRTIIGRDGRILSETPQWIIDAGSAERYEAIAGKTTFTARKLVVEALVESGEMDGEPKPTQRKANFYEKGDKPLEIIGTRQWYIRNGGRDDDLRNALLERGRELEWVPEHMRHRYENWVEGLNGDWLISRQRFFGVPFPVWYPLGTDGEPDYDHPLLPDESALPVDPASQPPSGYQESQRGVAGGFIGDPDVMDTWATSSLTPQIVTGWERDADLFAKTFPMDFAPEAHDIIRTWVFSRVVRAHLENGMLPWKRAAISGFVTDPDRKKMSKSKGNTVVPTEIIDQFGADAVRWRAAMARPGMDSPFDKAQMKVGRRLAMKILNASKFVLGFGEGGQVCDITNPADLSMLAGLRELIAEATEAFDKFNYTAALEVCEQFFWTFCDDYLELIKERAYDSEGADNAGALSARTALRLALDVMLRLFAPFLPFVTEEVWSWWKDGSVHTSSWPTADEVPATGDVDLMSDVSAALVELRGVKSTHKVPMRTPILSARISAPASVIANLKAVESDLTKVSKTESLTFLTGGDKLVLEAELGEPPAKRKK.

A compositionally biased stretch (polar residues) spans 1–13 (MTSQTFTTSSATP). Residues 1–21 (MTSQTFTTSSATPPTRGVVPD) form a disordered region. The short motif at 63-73 (PTVSGHLHPGH) is the 'HIGH' region element. The interval 479-505 (YDHPLLPDESALPVDPASQPPSGYQES) is disordered. The short motif at 595–599 (KMSKS) is the 'KMSKS' region element. Lys-598 serves as a coordination point for ATP.

It belongs to the class-I aminoacyl-tRNA synthetase family. ValS type 2 subfamily. In terms of assembly, monomer.

The protein resides in the cytoplasm. The enzyme catalyses tRNA(Val) + L-valine + ATP = L-valyl-tRNA(Val) + AMP + diphosphate. Functionally, catalyzes the attachment of valine to tRNA(Val). As ValRS can inadvertently accommodate and process structurally similar amino acids such as threonine, to avoid such errors, it has a 'posttransfer' editing activity that hydrolyzes mischarged Thr-tRNA(Val) in a tRNA-dependent manner. The protein is Valine--tRNA ligase of Cutibacterium acnes (strain DSM 16379 / KPA171202) (Propionibacterium acnes).